The primary structure comprises 426 residues: PHD finger-containing protein 6 (426 aa).

Residues 9–59 (RSICETCGHQGWKNSLVTCSKCRIACEHCYCMRESSFETSIHFVCADCSMR) form a PHD-type zinc finger. Residues Cys12, Cys15, Cys27, Cys30, His36, Cys39, Cys53, and Cys56 each contribute to the Zn(2+) site. Disordered stretches follow at residues 122–144 (TFRV…TAGF) and 185–205 (RQAS…GDGA).

Interacts directly with AIPP3/BDT1.

Together with AIPP3/BDT1, cooperates to form a BAH-PHD bivalent histone reader complex able to read histone H3 lysine 27 trimethylation (H3K27me3) histone marks in order to regulate transcription, especially to prevent early flowering; promotes AIPP3/BDT1 binding to H3K27me3. This Arabidopsis thaliana (Mouse-ear cress) protein is PHD finger-containing protein 6.